A 118-amino-acid chain; its full sequence is Galanin peptides (118 aa).

The signal sequence occupies residues 1-19; it reads MHRCVGGVCVSLIVCAFLT. Residues 20-30 constitute a propeptide that is removed on maturation; it reads ETLGMVIAAKE. At Ala61 the chain carries Alanine amide.

The protein belongs to the galanin family. Strongly expressed in brain and stomach, moderately in the eye, and very weakly in heart, kidney and gills. Not detected in liver.

Its subcellular location is the secreted. In terms of biological role, endocrine hormone of the central and peripheral nervous systems that binds and activates the G protein-coupled receptors GALR1 (galr1a and galr1b) and GALR2 (galr2a and galr2b). This small neuropeptide may regulate diverse physiologic functions including contraction of smooth muscle of the gastrointestinal and genitourinary tract, growth hormone and insulin release and adrenal secretion. This is Galanin peptides from Danio rerio (Zebrafish).